The following is a 269-amino-acid chain: UPF0524 protein C3orf70 homolog A (269 aa).

2 disordered regions span residues 139 to 203 (VQRP…DSGI) and 215 to 249 (DEDS…QDEC). The span at 141–150 (RPPPPTPNPT) shows a compositional bias: pro residues. Positions 151–164 (HQPQTAAPQPVPQR) are enriched in low complexity. Over residues 179–191 (QAKEKISAPKMDH) the composition is skewed to basic and acidic residues. The span at 215-233 (DEDSCVDDDDEEEEDDELS) shows a compositional bias: acidic residues.

This sequence belongs to the UPF0524 family.

Functionally, plays a role in neuronal and neurobehavioral development. Required for normal expression of neuronal markers elavl3 and eno2 and neurobehaviors related to circadian rhythm and changes in light-dark conditions. This chain is UPF0524 protein C3orf70 homolog A, found in Danio rerio (Zebrafish).